The chain runs to 101 residues: Small ribosomal subunit protein uS14 (101 aa).

The protein belongs to the universal ribosomal protein uS14 family. Part of the 30S ribosomal subunit. Contacts proteins S3 and S10.

Functionally, binds 16S rRNA, required for the assembly of 30S particles and may also be responsible for determining the conformation of the 16S rRNA at the A site. This Tropheryma whipplei (strain TW08/27) (Whipple's bacillus) protein is Small ribosomal subunit protein uS14.